Reading from the N-terminus, the 415-residue chain is Serine hydroxymethyltransferase (415 aa).

(6S)-5,6,7,8-tetrahydrofolate is bound by residues Leu117 and 121–123 (GHL). Lys225 bears the N6-(pyridoxal phosphate)lysine mark. Residue 349 to 351 (SPF) coordinates (6S)-5,6,7,8-tetrahydrofolate.

Belongs to the SHMT family. Homodimer. Pyridoxal 5'-phosphate serves as cofactor.

The protein resides in the cytoplasm. The enzyme catalyses (6R)-5,10-methylene-5,6,7,8-tetrahydrofolate + glycine + H2O = (6S)-5,6,7,8-tetrahydrofolate + L-serine. It participates in one-carbon metabolism; tetrahydrofolate interconversion. The protein operates within amino-acid biosynthesis; glycine biosynthesis; glycine from L-serine: step 1/1. Its function is as follows. Catalyzes the reversible interconversion of serine and glycine with tetrahydrofolate (THF) serving as the one-carbon carrier. This reaction serves as the major source of one-carbon groups required for the biosynthesis of purines, thymidylate, methionine, and other important biomolecules. Also exhibits THF-independent aldolase activity toward beta-hydroxyamino acids, producing glycine and aldehydes, via a retro-aldol mechanism. This Nitratiruptor sp. (strain SB155-2) protein is Serine hydroxymethyltransferase.